We begin with the raw amino-acid sequence, 146 residues long: UPF0742 protein SPAC977.02 (146 aa).

Residues 38–60 (LTVKYCLAVKLLIYLLYCWYIYS) form a helical membrane-spanning segment.

Belongs to the UPF0742 family.

The protein localises to the cytoplasm. The protein resides in the nucleus membrane. This is UPF0742 protein SPAC977.02 from Schizosaccharomyces pombe (strain 972 / ATCC 24843) (Fission yeast).